We begin with the raw amino-acid sequence, 123 residues long: MKKLTSENSHRQQKVASIINEALIEILHRGKMLDPRLYDCPLTITKIIVTADLKIANCYFLPFNTKLTPQEITESLNNSKNAIRNFVTGKINMKYSPDIRFHYDHGFDNALKVEQLLKDTNNI.

It belongs to the RbfA family. As to quaternary structure, monomer. Binds 30S ribosomal subunits, but not 50S ribosomal subunits or 70S ribosomes.

It localises to the cytoplasm. One of several proteins that assist in the late maturation steps of the functional core of the 30S ribosomal subunit. Associates with free 30S ribosomal subunits (but not with 30S subunits that are part of 70S ribosomes or polysomes). Required for efficient processing of 16S rRNA. May interact with the 5'-terminal helix region of 16S rRNA. In Rickettsia bellii (strain OSU 85-389), this protein is Ribosome-binding factor A.